Reading from the N-terminus, the 339-residue chain is tRNA-splicing endonuclease (339 aa).

Catalysis depends on residues Tyr274, His285, and Lys316.

It belongs to the tRNA-intron endonuclease family. Archaeal long subfamily. Homodimer. Requires Ca(2+) as cofactor. Mg(2+) is required as a cofactor. In terms of processing, the N-terminus is blocked.

The catalysed reaction is pretRNA = a 3'-half-tRNA molecule with a 5'-OH end + a 5'-half-tRNA molecule with a 2',3'-cyclic phosphate end + an intron with a 2',3'-cyclic phosphate and a 5'-hydroxyl terminus.. Its function is as follows. Endonuclease that removes tRNA introns. Cleaves pre-tRNA at the 5'- and 3'-splice sites to release the intron. The products are an intron and two tRNA half-molecules bearing 2',3' cyclic phosphate and 5'-OH termini. Recognizes a pseudosymmetric substrate in which 2 bulged loops of 3 bases are separated by a stem of 4 bp. The sequence is that of tRNA-splicing endonuclease from Haloferax volcanii (strain ATCC 29605 / DSM 3757 / JCM 8879 / NBRC 14742 / NCIMB 2012 / VKM B-1768 / DS2) (Halobacterium volcanii).